The primary structure comprises 264 residues: tRNA (guanine-N(1)-)-methyltransferase (264 aa).

S-adenosyl-L-methionine contacts are provided by residues Gly125 and 145–150 (LGDFVL).

This sequence belongs to the RNA methyltransferase TrmD family. Homodimer.

The protein localises to the cytoplasm. The enzyme catalyses guanosine(37) in tRNA + S-adenosyl-L-methionine = N(1)-methylguanosine(37) in tRNA + S-adenosyl-L-homocysteine + H(+). Specifically methylates guanosine-37 in various tRNAs. In Burkholderia vietnamiensis (strain G4 / LMG 22486) (Burkholderia cepacia (strain R1808)), this protein is tRNA (guanine-N(1)-)-methyltransferase.